Here is a 212-residue protein sequence, read N- to C-terminus: Large ribosomal subunit protein bL25 (212 aa).

The disordered stretch occupies residues 179–212 (EPEEEELPEDDEAAAEGEDAAAGEEAEAPAESED).

Belongs to the bacterial ribosomal protein bL25 family. CTC subfamily. In terms of assembly, part of the 50S ribosomal subunit; part of the 5S rRNA/L5/L18/L25 subcomplex. Contacts the 5S rRNA. Binds to the 5S rRNA independently of L5 and L18.

Functionally, this is one of the proteins that binds to the 5S RNA in the ribosome where it forms part of the central protuberance. In Corynebacterium urealyticum (strain ATCC 43042 / DSM 7109), this protein is Large ribosomal subunit protein bL25.